The primary structure comprises 1034 residues: Beta-galactosidase (1034 aa).

Residues N108 and D207 each coordinate substrate. Residue D207 coordinates Na(+). E423, H425, and E468 together coordinate Mg(2+). Residues E468 and 544 to 547 contribute to the substrate site; that span reads EYAH. Residue E468 is the Proton donor of the active site. E544 functions as the Nucleophile in the catalytic mechanism. N604 serves as a coordination point for Mg(2+). Na(+)-binding residues include F608 and N611. N611 and W1010 together coordinate substrate.

This sequence belongs to the glycosyl hydrolase 2 family. As to quaternary structure, homotetramer. Requires Mg(2+) as cofactor. Na(+) serves as cofactor.

The enzyme catalyses Hydrolysis of terminal non-reducing beta-D-galactose residues in beta-D-galactosides.. The chain is Beta-galactosidase from Klebsiella pneumoniae.